The chain runs to 237 residues: Pyridoxine 5'-phosphate synthase (237 aa).

3-amino-2-oxopropyl phosphate contacts are provided by Asn7 and Arg18. The active-site Proton acceptor is the His43. Arg45 and His50 together coordinate 1-deoxy-D-xylulose 5-phosphate. The active-site Proton acceptor is Glu70. A 1-deoxy-D-xylulose 5-phosphate-binding site is contributed by Thr100. His190 serves as the catalytic Proton donor. 3-amino-2-oxopropyl phosphate-binding positions include Asp191 and 213 to 214 (GH).

The protein belongs to the PNP synthase family. As to quaternary structure, homooctamer; tetramer of dimers.

Its subcellular location is the cytoplasm. It carries out the reaction 3-amino-2-oxopropyl phosphate + 1-deoxy-D-xylulose 5-phosphate = pyridoxine 5'-phosphate + phosphate + 2 H2O + H(+). It functions in the pathway cofactor biosynthesis; pyridoxine 5'-phosphate biosynthesis; pyridoxine 5'-phosphate from D-erythrose 4-phosphate: step 5/5. In terms of biological role, catalyzes the complicated ring closure reaction between the two acyclic compounds 1-deoxy-D-xylulose-5-phosphate (DXP) and 3-amino-2-oxopropyl phosphate (1-amino-acetone-3-phosphate or AAP) to form pyridoxine 5'-phosphate (PNP) and inorganic phosphate. This Bacteroides fragilis (strain ATCC 25285 / DSM 2151 / CCUG 4856 / JCM 11019 / LMG 10263 / NCTC 9343 / Onslow / VPI 2553 / EN-2) protein is Pyridoxine 5'-phosphate synthase.